The sequence spans 297 residues: Acetyl-coenzyme A carboxylase carboxyl transferase subunit beta (297 aa).

Residues Leu27 to Val296 enclose the CoA carboxyltransferase N-terminal domain. Residues Cys31, Cys34, Cys50, and Cys53 each coordinate Zn(2+). A C4-type zinc finger spans residues Cys31–Cys53.

It belongs to the AccD/PCCB family. Acetyl-CoA carboxylase is a heterohexamer composed of biotin carboxyl carrier protein (AccB), biotin carboxylase (AccC) and two subunits each of ACCase subunit alpha (AccA) and ACCase subunit beta (AccD). Requires Zn(2+) as cofactor.

Its subcellular location is the cytoplasm. The catalysed reaction is N(6)-carboxybiotinyl-L-lysyl-[protein] + acetyl-CoA = N(6)-biotinyl-L-lysyl-[protein] + malonyl-CoA. It participates in lipid metabolism; malonyl-CoA biosynthesis; malonyl-CoA from acetyl-CoA: step 1/1. Its function is as follows. Component of the acetyl coenzyme A carboxylase (ACC) complex. Biotin carboxylase (BC) catalyzes the carboxylation of biotin on its carrier protein (BCCP) and then the CO(2) group is transferred by the transcarboxylase to acetyl-CoA to form malonyl-CoA. This Pseudomonas putida (strain GB-1) protein is Acetyl-coenzyme A carboxylase carboxyl transferase subunit beta.